The sequence spans 395 residues: Phosphoglycerate kinase (395 aa).

Substrate is bound by residues 21–23 (DLN), R36, 59–62 (HLGR), R113, and R146. Residues K197, E324, and 350-353 (GGDT) each bind ATP.

This sequence belongs to the phosphoglycerate kinase family. In terms of assembly, monomer.

Its subcellular location is the cytoplasm. It carries out the reaction (2R)-3-phosphoglycerate + ATP = (2R)-3-phospho-glyceroyl phosphate + ADP. Its pathway is carbohydrate degradation; glycolysis; pyruvate from D-glyceraldehyde 3-phosphate: step 2/5. The protein is Phosphoglycerate kinase of Acinetobacter baumannii (strain ACICU).